The chain runs to 1099 residues: DNA-directed RNA polymerase subunit beta (1099 aa).

Belongs to the RNA polymerase beta chain family. As to quaternary structure, in plastids the minimal PEP RNA polymerase catalytic core is composed of four subunits: alpha, beta, beta', and beta''. When a (nuclear-encoded) sigma factor is associated with the core the holoenzyme is formed, which can initiate transcription.

Its subcellular location is the plastid. The protein localises to the chloroplast. The enzyme catalyses RNA(n) + a ribonucleoside 5'-triphosphate = RNA(n+1) + diphosphate. Functionally, DNA-dependent RNA polymerase catalyzes the transcription of DNA into RNA using the four ribonucleoside triphosphates as substrates. The sequence is that of DNA-directed RNA polymerase subunit beta from Bigelowiella natans (Pedinomonas minutissima).